Consider the following 251-residue polypeptide: UPF0246 protein DSY0297 (251 aa).

Belongs to the UPF0246 family.

This chain is UPF0246 protein DSY0297, found in Desulfitobacterium hafniense (strain Y51).